Consider the following 431-residue polypeptide: STE20-related kinase adapter protein alpha (431 aa).

2 positions are modified to phosphoserine: Ser2 and Ser46. In terms of domain architecture, Protein kinase spans 69–379 (YELLTVIGKG…ASTLLNHSFF (311 aa)). Positions 310 to 347 (LTMSPSRSVANSGLSDSLTTSTPRPSNGDSPSHPYHRT) are disordered. Over residues 312–339 (MSPSRSVANSGLSDSLTTSTPRPSNGDS) the composition is skewed to polar residues. Phosphothreonine; by LKB1 is present on residues Thr329 and Thr401. Thr419 is modified (phosphothreonine).

This sequence belongs to the protein kinase superfamily. STE Ser/Thr protein kinase family. STE20 subfamily. In terms of assembly, component of a trimeric complex composed of STK11/LKB1, STRAD (STRADA or STRADB) and CAB39/MO25 (CAB39/MO25alpha or CAB39L/MO25beta): the complex tethers STK11/LKB1 in the cytoplasm and stimulates its catalytic activity.

The protein resides in the nucleus. Its subcellular location is the cytoplasm. Functionally, pseudokinase which, in complex with CAB39/MO25 (CAB39/MO25alpha or CAB39L/MO25beta), binds to and activates STK11/LKB1. Adopts a closed conformation typical of active protein kinases and binds STK11/LKB1 as a pseudosubstrate, promoting conformational change of STK11/LKB1 in an active conformation. This chain is STE20-related kinase adapter protein alpha (STRADA), found in Pongo abelii (Sumatran orangutan).